The following is a 139-amino-acid chain: Nucleoside diphosphate kinase (139 aa).

Lys11, Phe59, Arg87, Thr93, Arg104, and Asn114 together coordinate ATP. His117 serves as the catalytic Pros-phosphohistidine intermediate.

This sequence belongs to the NDK family. Homotetramer. It depends on Mg(2+) as a cofactor.

Its subcellular location is the cytoplasm. It carries out the reaction a 2'-deoxyribonucleoside 5'-diphosphate + ATP = a 2'-deoxyribonucleoside 5'-triphosphate + ADP. The enzyme catalyses a ribonucleoside 5'-diphosphate + ATP = a ribonucleoside 5'-triphosphate + ADP. Functionally, major role in the synthesis of nucleoside triphosphates other than ATP. The ATP gamma phosphate is transferred to the NDP beta phosphate via a ping-pong mechanism, using a phosphorylated active-site intermediate. The protein is Nucleoside diphosphate kinase of Flavobacterium psychrophilum (strain ATCC 49511 / DSM 21280 / CIP 103535 / JIP02/86).